A 391-amino-acid polypeptide reads, in one-letter code: uncharacterized protein (391 aa).

WD repeat units follow at residues 137–179 (VNDI…PILA) and 182–222 (PLSS…SAEE).

It localises to the cytoplasm. The protein resides in the nucleus. This is an uncharacterized protein from Schizosaccharomyces pombe (strain 972 / ATCC 24843) (Fission yeast).